Reading from the N-terminus, the 242-residue chain is Orotidine 5'-phosphate decarboxylase (242 aa).

Residues aspartate 16, lysine 37, aspartate 64–threonine 73, threonine 128, arginine 190, glutamine 199, glycine 219, and arginine 220 contribute to the substrate site. The active-site Proton donor is lysine 66.

Belongs to the OMP decarboxylase family. Type 1 subfamily. In terms of assembly, homodimer.

The enzyme catalyses orotidine 5'-phosphate + H(+) = UMP + CO2. It functions in the pathway pyrimidine metabolism; UMP biosynthesis via de novo pathway; UMP from orotate: step 2/2. In terms of biological role, catalyzes the decarboxylation of orotidine 5'-monophosphate (OMP) to uridine 5'-monophosphate (UMP). The sequence is that of Orotidine 5'-phosphate decarboxylase from Prochlorococcus marinus (strain MIT 9215).